The primary structure comprises 165 residues: Type 3 secretion system regulator YopR (165 aa).

The 5' secretion signal stretch occupies residues 2 to 11 (TVTLNRGSIT). Positions 131–149 (PYLSELINKELMILLPYNS) are 3' secretion signal.

It belongs to the YopR family.

It localises to the secreted. Its function is as follows. May be involved in the regulation of the assembly of the type III secretion system (T3SS), also called injectisome, which is used to inject bacterial effector proteins into eukaryotic host cells. May control the secretion and/or polymerization of YscF/SctF, the principal component of the needle filament, thereby impacting the assembly of the T3SS. Involved in pathogenesis. Essential for the establishment of Yersinia infections in a mouse model system. This chain is Type 3 secretion system regulator YopR, found in Yersinia enterocolitica.